The chain runs to 169 residues: Myosin regulatory light chain 2, skeletal muscle isoform A (169 aa).

Serine 21 bears the Phosphoserine mark. EF-hand domains lie at 26–61 (SQIQ…MGQL), 96–131 (DPED…QCDR), and 132–167 (FTAE…GEEK). 4 residues coordinate Ca(2+): aspartate 39, asparagine 41, aspartate 43, and aspartate 50.

In terms of assembly, myosin is a hexamer of 2 heavy chains and 4 light chains. Interacts with nanos3; the interaction negatively regulates mylpfa phosphorylation.

Functionally, myosin regulatory subunit that plays a role to maintain muscle integrity during early development. Plays a role in muscle contraction. The protein is Myosin regulatory light chain 2, skeletal muscle isoform A (mylpfa) of Danio rerio (Zebrafish).